We begin with the raw amino-acid sequence, 492 residues long: Prenylcysteine oxidase 1-like (492 aa).

The first 21 residues, 1 to 21 (MAHAARLLAALAALLAAAATG), serve as a signal peptide directing secretion. An N-linked (GlcNAc...) asparagine glycan is attached at Asn340.

This sequence belongs to the prenylcysteine oxidase family. The cofactor is FAD.

It localises to the secreted. Functionally, likely to have oxidoreductase activity. Required in the mevalonate pathway to regulate prenylation and enhances the bactericidal activity of neutrophils. The sequence is that of Prenylcysteine oxidase 1-like (PCYOX1L) from Bos taurus (Bovine).